Reading from the N-terminus, the 78-residue chain is Small ribosomal subunit protein uS17 (78 aa).

It belongs to the universal ribosomal protein uS17 family. In terms of assembly, part of the 30S ribosomal subunit.

One of the primary rRNA binding proteins, it binds specifically to the 5'-end of 16S ribosomal RNA. This chain is Small ribosomal subunit protein uS17, found in Allorhizobium ampelinum (strain ATCC BAA-846 / DSM 112012 / S4) (Agrobacterium vitis (strain S4)).